Reading from the N-terminus, the 131-residue chain is (R)-mandelonitrile lyase (131 aa).

Residues valine 42 to methionine 104 form the Cupin type-2 domain. 5 residues coordinate Mn(2+): histidine 53, histidine 55, glutamine 59, histidine 94, and histidine 96.

It belongs to the cupin domain-containing hydroxynitrile lyase family. The cofactor is Mn(2+).

It carries out the reaction (R)-mandelonitrile = benzaldehyde + hydrogen cyanide. Hydroxynitrile lyase which catalyzes mandelonitrile formation from benzaldehyde and hydrogen cyanide with high stereoselectivity in presence of manganese. This chain is (R)-mandelonitrile lyase, found in Granulicella tundricola (strain ATCC BAA-1859 / DSM 23138 / MP5ACTX9).